A 184-amino-acid chain; its full sequence is Protein GrpE (184 aa).

Residues 1 to 26 are disordered; that stretch reads MTAPQEPVDSTPESGENAATPGLEDD.

Belongs to the GrpE family. In terms of assembly, homodimer.

The protein localises to the cytoplasm. Participates actively in the response to hyperosmotic and heat shock by preventing the aggregation of stress-denatured proteins, in association with DnaK and GrpE. It is the nucleotide exchange factor for DnaK and may function as a thermosensor. Unfolded proteins bind initially to DnaJ; upon interaction with the DnaJ-bound protein, DnaK hydrolyzes its bound ATP, resulting in the formation of a stable complex. GrpE releases ADP from DnaK; ATP binding to DnaK triggers the release of the substrate protein, thus completing the reaction cycle. Several rounds of ATP-dependent interactions between DnaJ, DnaK and GrpE are required for fully efficient folding. This chain is Protein GrpE, found in Bordetella bronchiseptica (strain ATCC BAA-588 / NCTC 13252 / RB50) (Alcaligenes bronchisepticus).